Reading from the N-terminus, the 95-residue chain is Small ribosomal subunit protein uS17 (95 aa).

It belongs to the universal ribosomal protein uS17 family. Part of the 30S ribosomal subunit.

Its function is as follows. One of the primary rRNA binding proteins, it binds specifically to the 5'-end of 16S ribosomal RNA. This Psychrobacter sp. (strain PRwf-1) protein is Small ribosomal subunit protein uS17.